The primary structure comprises 333 residues: tRNA N6-adenosine threonylcarbamoyltransferase (333 aa).

Fe cation is bound by residues histidine 111 and histidine 115. Residues 134-138, aspartate 167, glycine 180, and asparagine 272 contribute to the substrate site; that span reads LVSGG. Fe cation is bound at residue aspartate 300.

This sequence belongs to the KAE1 / TsaD family. Requires Fe(2+) as cofactor.

It is found in the cytoplasm. The catalysed reaction is L-threonylcarbamoyladenylate + adenosine(37) in tRNA = N(6)-L-threonylcarbamoyladenosine(37) in tRNA + AMP + H(+). Functionally, required for the formation of a threonylcarbamoyl group on adenosine at position 37 (t(6)A37) in tRNAs that read codons beginning with adenine. Is involved in the transfer of the threonylcarbamoyl moiety of threonylcarbamoyl-AMP (TC-AMP) to the N6 group of A37, together with TsaE and TsaB. TsaD likely plays a direct catalytic role in this reaction. This chain is tRNA N6-adenosine threonylcarbamoyltransferase, found in Legionella pneumophila (strain Corby).